Reading from the N-terminus, the 469-residue chain is UDP-N-acetylmuramate--L-alanine ligase (469 aa).

122-128 is an ATP binding site; sequence GTHGKTT.

This sequence belongs to the MurCDEF family.

The protein resides in the cytoplasm. It carries out the reaction UDP-N-acetyl-alpha-D-muramate + L-alanine + ATP = UDP-N-acetyl-alpha-D-muramoyl-L-alanine + ADP + phosphate + H(+). It functions in the pathway cell wall biogenesis; peptidoglycan biosynthesis. Functionally, cell wall formation. This chain is UDP-N-acetylmuramate--L-alanine ligase, found in Legionella pneumophila (strain Paris).